The sequence spans 367 residues: Isoflavone 4'-O-methyltransferase (367 aa).

S-adenosyl-L-methionine contacts are provided by residues 209-212, Asp233, 233-234, 253-254, and Lys267; these read VGGG, DQ, and DM. His271 acts as the Proton acceptor in catalysis.

The protein belongs to the class I-like SAM-binding methyltransferase superfamily. Cation-independent O-methyltransferase family. COMT subfamily.

The enzyme catalyses a 4'-hydroxyisoflavone + S-adenosyl-L-methionine = a 4'-methoxyisoflavone + S-adenosyl-L-homocysteine + H(+). It carries out the reaction (2R,3S)-2,4',7-trihydroxyisoflavanone + S-adenosyl-L-methionine = (2R,3S)-2,7-dihydroxy-4'-methoxyisoflavanone + S-adenosyl-L-homocysteine + H(+). In terms of biological role, 2-hydroxyisoflavanone 4'-O-methyltransferase involved in the biosynthesis of formononetin. Can use 2,7,4'-trihydroxyisoflavanone, (+)-6a-hydroxymaackiain or medicarpin as substrate, but not daidzein or (-)-6a-hydroxymaackiain. The polypeptide is Isoflavone 4'-O-methyltransferase (HI4'OMT) (Glycyrrhiza echinata (Licorice)).